A 390-amino-acid polypeptide reads, in one-letter code: Transposase for insertion sequence element IS21 (390 aa).

One can recognise an HTH IS21-type domain in the interval 5-66; that stretch reads EDFYMIKQMR…PFMDYIDMRL (62 aa). The segment at residues 20–39 is a DNA-binding region (H-T-H motif); the sequence is IVDIATQIGCSERTVRRYLK. In terms of domain architecture, Integrase catalytic spans 111 to 285; it reads FETQPRYQLQ…TPEQRFALEQ (175 aa).

The protein belongs to the transposase IS21/IS408/IS1162 family.

Involved in the transposition of the insertion sequence. In Pseudomonas aeruginosa, this protein is Transposase for insertion sequence element IS21 (istA).